We begin with the raw amino-acid sequence, 969 residues long: Protein translocase subunit SecA (969 aa).

ATP-binding positions include Q99, 117–121 (GEGKT), and D631.

Belongs to the SecA family. In terms of assembly, monomer and homodimer. Part of the essential Sec protein translocation apparatus which comprises SecA, SecYEG and auxiliary proteins SecDF. Other proteins may also be involved.

It is found in the cell inner membrane. The protein localises to the cytoplasm. It catalyses the reaction ATP + H2O + cellular proteinSide 1 = ADP + phosphate + cellular proteinSide 2.. Its function is as follows. Part of the Sec protein translocase complex. Interacts with the SecYEG preprotein conducting channel. Has a central role in coupling the hydrolysis of ATP to the transfer of proteins into and across the cell membrane, serving as an ATP-driven molecular motor driving the stepwise translocation of polypeptide chains across the membrane. The sequence is that of Protein translocase subunit SecA from Chlamydia trachomatis serovar A (strain ATCC VR-571B / DSM 19440 / HAR-13).